Reading from the N-terminus, the 209-residue chain is Large ribosomal subunit protein uL3 (209 aa).

Q150 bears the N5-methylglutamine mark.

It belongs to the universal ribosomal protein uL3 family. Part of the 50S ribosomal subunit. Forms a cluster with proteins L14 and L19. Post-translationally, methylated by PrmB.

In terms of biological role, one of the primary rRNA binding proteins, it binds directly near the 3'-end of the 23S rRNA, where it nucleates assembly of the 50S subunit. The sequence is that of Large ribosomal subunit protein uL3 from Aliivibrio salmonicida (strain LFI1238) (Vibrio salmonicida (strain LFI1238)).